Consider the following 469-residue polypeptide: UDP-N-acetylmuramate--L-alanine ligase (469 aa).

113–119 (GTHGKTT) is a binding site for ATP.

This sequence belongs to the MurCDEF family.

It is found in the cytoplasm. It catalyses the reaction UDP-N-acetyl-alpha-D-muramate + L-alanine + ATP = UDP-N-acetyl-alpha-D-muramoyl-L-alanine + ADP + phosphate + H(+). The protein operates within cell wall biogenesis; peptidoglycan biosynthesis. Cell wall formation. The sequence is that of UDP-N-acetylmuramate--L-alanine ligase from Neisseria gonorrhoeae (strain ATCC 700825 / FA 1090).